The primary structure comprises 188 residues: Probable manganese efflux pump MntP (188 aa).

6 helical membrane passes run 3 to 23 (YTAT…ASIG), 41 to 61 (LIFG…GILA), 66 to 86 (LEWN…RMII), 106 to 128 (WLLV…GLAF), 143 to 163 (ATLI…PMLG), and 168 to 188 (ILGG…HFHG).

The protein belongs to the MntP (TC 9.B.29) family.

The protein resides in the cell inner membrane. Functionally, probably functions as a manganese efflux pump. The chain is Probable manganese efflux pump MntP from Salmonella heidelberg (strain SL476).